The sequence spans 262 residues: Cytochrome c oxidase subunit 3 (262 aa).

Helical transmembrane passes span 39-59 (YDIS…YQWW), 83-103 (GMIL…WAFF), 120-140 (MGII…ILLA), 163-183 (GLFF…YEYI), 198-218 (FFMA…FLLV), and 240-260 (AWYW…IYWW).

Belongs to the cytochrome c oxidase subunit 3 family. As to quaternary structure, component of the cytochrome c oxidase (complex IV, CIV), a multisubunit enzyme composed of a catalytic core of 3 subunits and several supernumerary subunits. The complex exists as a monomer or a dimer and forms supercomplexes (SCs) in the inner mitochondrial membrane with ubiquinol-cytochrome c oxidoreductase (cytochrome b-c1 complex, complex III, CIII).

It is found in the mitochondrion inner membrane. The enzyme catalyses 4 Fe(II)-[cytochrome c] + O2 + 8 H(+)(in) = 4 Fe(III)-[cytochrome c] + 2 H2O + 4 H(+)(out). Its function is as follows. Component of the cytochrome c oxidase, the last enzyme in the mitochondrial electron transport chain which drives oxidative phosphorylation. The respiratory chain contains 3 multisubunit complexes succinate dehydrogenase (complex II, CII), ubiquinol-cytochrome c oxidoreductase (cytochrome b-c1 complex, complex III, CIII) and cytochrome c oxidase (complex IV, CIV), that cooperate to transfer electrons derived from NADH and succinate to molecular oxygen, creating an electrochemical gradient over the inner membrane that drives transmembrane transport and the ATP synthase. Cytochrome c oxidase is the component of the respiratory chain that catalyzes the reduction of oxygen to water. Electrons originating from reduced cytochrome c in the intermembrane space (IMS) are transferred via the dinuclear copper A center (CU(A)) of subunit 2 and heme A of subunit 1 to the active site in subunit 1, a binuclear center (BNC) formed by heme A3 and copper B (CU(B)). The BNC reduces molecular oxygen to 2 water molecules using 4 electrons from cytochrome c in the IMS and 4 protons from the mitochondrial matrix. The protein is Cytochrome c oxidase subunit 3 (mt:CoIII) of Drosophila melanogaster (Fruit fly).